The following is a 154-amino-acid chain: Interleukin-2 (154 aa).

An N-terminal signal peptide occupies residues 1 to 20 (MYKLQLLSCIALTLALVANS). An O-linked (GalNAc...) threonine glycan is attached at Thr23. Cys78 and Cys126 are joined by a disulfide.

It belongs to the IL-2 family.

The protein localises to the secreted. Cytokine produced by activated CD4-positive helper T-cells and to a lesser extend activated CD8-positive T-cells and natural killer (NK) cells that plays pivotal roles in the immune response and tolerance. Binds to a receptor complex composed of either the high-affinity trimeric IL-2R (IL2RA/CD25, IL2RB/CD122 and IL2RG/CD132) or the low-affinity dimeric IL-2R (IL2RB and IL2RG). Interaction with the receptor leads to oligomerization and conformation changes in the IL-2R subunits resulting in downstream signaling starting with phosphorylation of JAK1 and JAK3. In turn, JAK1 and JAK3 phosphorylate the receptor to form a docking site leading to the phosphorylation of several substrates including STAT5. This process leads to activation of several pathways including STAT, phosphoinositide-3-kinase/PI3K and mitogen-activated protein kinase/MAPK pathways. Functions as a T-cell growth factor and can increase NK-cell cytolytic activity as well. Promotes strong proliferation of activated B-cells and subsequently immunoglobulin production. Plays a pivotal role in regulating the adaptive immune system by controlling the survival and proliferation of regulatory T-cells, which are required for the maintenance of immune tolerance. Moreover, participates in the differentiation and homeostasis of effector T-cell subsets, including Th1, Th2, Th17 as well as memory CD8-positive T-cells. The polypeptide is Interleukin-2 (IL2) (Lama glama (Llama)).